We begin with the raw amino-acid sequence, 248 residues long: MSEALLVKVGGSLRGAEALLDELAAYPGPLVLVHGGGPEIGAWLGRLGYESRFVGGLRVTPPEQLEVVEMALYLTGKRLAEGLSRRGRKALALSGRDALCLKGRALPELGRVGEVVEVEVGLLQDLLAKGYTPLLAPIALDAEGPLNVNADTAAGAVAGALGWPAVFLTDVEGVYRDPKDPRTRFPRLTPKEVEALKGEGVIQGGMIPKVEAALSALRAGAPWAAIAKGERGVLEAVLRGEAGTRFTL.

Substrate-binding positions include 36–37, Arg-58, and Asn-147; that span reads GG.

Belongs to the acetylglutamate kinase family. ArgB subfamily.

It is found in the cytoplasm. The enzyme catalyses N-acetyl-L-glutamate + ATP = N-acetyl-L-glutamyl 5-phosphate + ADP. Its pathway is amino-acid biosynthesis; L-arginine biosynthesis; N(2)-acetyl-L-ornithine from L-glutamate: step 2/4. Catalyzes the ATP-dependent phosphorylation of N-acetyl-L-glutamate. The protein is Acetylglutamate kinase of Thermus thermophilus (strain ATCC BAA-163 / DSM 7039 / HB27).